A 311-amino-acid chain; its full sequence is MKVAVLGAAGGIGQALALLLKTQLPAGSHLSLYDIAPVTPGVAVDLSHIPTAVEIKGFAGEDPTPALVGADVVLISAGVARKPGMDRSDLFNINAGIVRNLIEKVAATCPTALVGIITNPVNTTVAIAAEVMKKAGVYDKNRLFGITTLDVIRSETFIAELKGLNVADVKVNVIGGHSGVTILPLLSQVEGVTFTDEEVASLTTRIQNAGTEVVEAKAGGGSATLSMGQAACRFGLSLVRGLQGEANIVECAYVDGGSEHAEFFAQPVLLGKNGIEKVLPYGEVSAFEANARDSMLDTLKGDIKLGVDFVK.

NAD(+) is bound by residues 7–13 (GAAGGIG) and D34. Substrate contacts are provided by R81 and R87. Residues N94 and 117–119 (ITN) each bind NAD(+). N119 and R153 together coordinate substrate. The active-site Proton acceptor is H177. M227 is a binding site for NAD(+).

The protein belongs to the LDH/MDH superfamily. MDH type 1 family. Homodimer.

It catalyses the reaction (S)-malate + NAD(+) = oxaloacetate + NADH + H(+). In terms of biological role, catalyzes the reversible oxidation of malate to oxaloacetate. The polypeptide is Malate dehydrogenase (Shewanella baltica (strain OS155 / ATCC BAA-1091)).